We begin with the raw amino-acid sequence, 144 residues long: Urease subunit beta (144 aa).

A compositionally biased stretch (low complexity) spans histidine 110–proline 119. The tract at residues histidine 110 to arginine 144 is disordered. Over residues leucine 133–arginine 144 the composition is skewed to basic and acidic residues.

This sequence belongs to the urease beta subunit family. Heterotrimer of UreA (gamma), UreB (beta) and UreC (alpha) subunits. Three heterotrimers associate to form the active enzyme.

The protein localises to the cytoplasm. It carries out the reaction urea + 2 H2O + H(+) = hydrogencarbonate + 2 NH4(+). It participates in nitrogen metabolism; urea degradation; CO(2) and NH(3) from urea (urease route): step 1/1. The polypeptide is Urease subunit beta (Micrococcus luteus (strain ATCC 4698 / DSM 20030 / JCM 1464 / CCM 169 / CCUG 5858 / IAM 1056 / NBRC 3333 / NCIMB 9278 / NCTC 2665 / VKM Ac-2230) (Micrococcus lysodeikticus)).